The primary structure comprises 108 residues: Replication restart protein PriB (108 aa).

The region spanning 11–108 (INRNQVIISG…VLHVRDTRII (98 aa)) is the SSB domain.

This sequence belongs to the PriB family. Homodimer. Interacts with PriA and DnaT. Component of the replication restart primosome. Primosome assembly occurs via a 'hand-off' mechanism. PriA binds to replication forks, subsequently PriB then DnaT bind; DnaT then displaces ssDNA to generate the helicase loading substrate.

In terms of biological role, involved in the restart of stalled replication forks, which reloads the replicative helicase on sites other than the origin of replication; the PriA-PriB pathway is the major replication restart pathway. During primosome assembly it facilitates complex formation between PriA and DnaT on DNA; stabilizes PriA on DNA. Stimulates the DNA unwinding activity of PriA helicase. The sequence is that of Replication restart protein PriB from Nitrosomonas europaea (strain ATCC 19718 / CIP 103999 / KCTC 2705 / NBRC 14298).